A 472-amino-acid chain; its full sequence is Glutamate--tRNA ligase 1 (472 aa).

A 'HIGH' region motif is present at residues 9–19; sequence PSPTGLLHVGN. The span at 112 to 131 shows a compositional bias: basic and acidic residues; the sequence is AMAEKRPPRYDGTWRDRDPS. The segment at 112–133 is disordered; the sequence is AMAEKRPPRYDGTWRDRDPSEA. The 'KMSKS' region motif lies at 238–242; sequence KLSKR. Lysine 241 contacts ATP.

Belongs to the class-I aminoacyl-tRNA synthetase family. Glutamate--tRNA ligase type 1 subfamily. In terms of assembly, monomer.

It localises to the cytoplasm. It catalyses the reaction tRNA(Glu) + L-glutamate + ATP = L-glutamyl-tRNA(Glu) + AMP + diphosphate. Catalyzes the attachment of glutamate to tRNA(Glu) in a two-step reaction: glutamate is first activated by ATP to form Glu-AMP and then transferred to the acceptor end of tRNA(Glu). The polypeptide is Glutamate--tRNA ligase 1 (Gluconobacter oxydans (strain 621H) (Gluconobacter suboxydans)).